Reading from the N-terminus, the 474-residue chain is UDP-N-acetylmuramate--L-alanine ligase (474 aa).

122-128 provides a ligand contact to ATP; sequence GTHGKTT.

This sequence belongs to the MurCDEF family.

Its subcellular location is the cytoplasm. The enzyme catalyses UDP-N-acetyl-alpha-D-muramate + L-alanine + ATP = UDP-N-acetyl-alpha-D-muramoyl-L-alanine + ADP + phosphate + H(+). The protein operates within cell wall biogenesis; peptidoglycan biosynthesis. Cell wall formation. This chain is UDP-N-acetylmuramate--L-alanine ligase, found in Saccharophagus degradans (strain 2-40 / ATCC 43961 / DSM 17024).